The following is a 452-amino-acid chain: Ribosomal protein uS12 methylthiotransferase RimO (452 aa).

The MTTase N-terminal domain occupies 3–118 (GKIGFVSLGC…VMQVIHLHLP (116 aa)). Positions 12, 48, 77, 149, 153, and 156 each coordinate [4Fe-4S] cluster. Residues 135–382 (LTPKHYAYLK…AKAEEISVGR (248 aa)) enclose the Radical SAM core domain. A TRAM domain is found at 384–452 (AKKIGKRLQV…SQGHDLIAET (69 aa)).

Belongs to the methylthiotransferase family. RimO subfamily. It depends on [4Fe-4S] cluster as a cofactor.

Its subcellular location is the cytoplasm. It carries out the reaction L-aspartate(89)-[ribosomal protein uS12]-hydrogen + (sulfur carrier)-SH + AH2 + 2 S-adenosyl-L-methionine = 3-methylsulfanyl-L-aspartate(89)-[ribosomal protein uS12]-hydrogen + (sulfur carrier)-H + 5'-deoxyadenosine + L-methionine + A + S-adenosyl-L-homocysteine + 2 H(+). Catalyzes the methylthiolation of an aspartic acid residue of ribosomal protein uS12. This Polynucleobacter necessarius subsp. necessarius (strain STIR1) protein is Ribosomal protein uS12 methylthiotransferase RimO.